The chain runs to 2894 residues: Bifunctional DNA-directed RNA polymerase subunit beta-beta' (2894 aa).

Residues 1–1378 are DNA-directed RNA polymerase subunit beta; that stretch reads MANFTKLKNR…DVNIYGDEQD (1378 aa). Residues 1385 to 2894 form a DNA-directed RNA polymerase subunit beta' region; the sequence is PIAIKEDERP…QEEYEEDEEE (1510 aa). Positions 1450, 1452, 1465, and 1468 each coordinate Zn(2+). The Mg(2+) site is built by aspartate 1849, aspartate 1851, and aspartate 1853. Residues cysteine 2179, cysteine 2253, cysteine 2260, and cysteine 2263 each coordinate Zn(2+).

The protein in the N-terminal section; belongs to the RNA polymerase beta chain family. This sequence in the C-terminal section; belongs to the RNA polymerase beta' chain family. As to quaternary structure, the RNAP catalytic core consists of 2 alpha, 1 beta/beta' and 1 omega subunit. When a sigma factor is associated with the core the holoenzyme is formed, which can initiate transcription. Mg(2+) serves as cofactor. The cofactor is Zn(2+).

It catalyses the reaction RNA(n) + a ribonucleoside 5'-triphosphate = RNA(n+1) + diphosphate. DNA-dependent RNA polymerase catalyzes the transcription of DNA into RNA using the four ribonucleoside triphosphates as substrates. The protein is Bifunctional DNA-directed RNA polymerase subunit beta-beta' (rpoBC) of Helicobacter hepaticus (strain ATCC 51449 / 3B1).